A 333-amino-acid polypeptide reads, in one-letter code: 1,5-anhydro-D-fructose reductase (333 aa).

NADP(+) contacts are provided by residues 9–12 (ASTI), 33–34 (ST), Arg38, 71–76 (TTNELH), 93–94 (EK), Asn120, 162–163 (WR), and Tyr283.

In terms of assembly, monomer.

The catalysed reaction is 1,5-anhydro-D-mannitol + NADP(+) = 1,5-anhydro-D-fructose + NADPH + H(+). Catalyzes the NADPH-specific reduction of 1,5-anhydro-D-fructose to 1,5-anhydro-D-mannitol. Also shows some activity against structurally related compounds such as 3-keto-1,5-anhydro-D-fructose, D-glucosone and D-xylosone. The enzyme cannot use NADH as cosubstrate. This Ensifer adhaerens (Sinorhizobium morelense) protein is 1,5-anhydro-D-fructose reductase (afr).